The primary structure comprises 387 residues: MSVIKMTDLDLAGKRVLIRADLNVPVKEGKVTSDARIRASLPTIEAALKQGAKVMVTSHLGRPTEGEYNEEFSLLPVVNYLKEKLSSPVRLAKDYLDGVEIAAGELVVLENVRFNKGEKKDDEALSKKYAALCDVYVMDAFGTAHRAQASTHGVGKFAPIACAGPLLSAELEALGKALGNPARPMVAIVGGSKVSTKLTVLGALSKIADKLIVGGGIANTFVAAQGHNVGKSLYEADLIPEAKRLLETCDIPVPTDVRVATEFSETAAATLKPANEIKDDEQILDLGDESAERLAEILKNAKTILWNGPVGVFEFPNFRKGTEIVARAIAESEAFSIAGGGDTLAAIDLFGIADQISYISTGGGAFLEFVEGKKLPAVVMLEERAKQ.

Residues D21–N23, R36, H59–R62, R113, and R146 contribute to the substrate site. Residues K197, E314, and G340–T343 contribute to the ATP site.

This sequence belongs to the phosphoglycerate kinase family. Monomer.

The protein localises to the cytoplasm. It catalyses the reaction (2R)-3-phosphoglycerate + ATP = (2R)-3-phospho-glyceroyl phosphate + ADP. It functions in the pathway carbohydrate degradation; glycolysis; pyruvate from D-glyceraldehyde 3-phosphate: step 2/5. In Yersinia pestis bv. Antiqua (strain Antiqua), this protein is Phosphoglycerate kinase.